A 224-amino-acid chain; its full sequence is Holliday junction branch migration complex subunit RuvA (224 aa).

The domain I stretch occupies residues 1-67 (MISWLKGEKV…EDGTSLYGFI (67 aa)). Residues 68 to 146 (EVNQRDLFRE…RFTDNDKTIH (79 aa)) form a domain II region. The interval 147–157 (ENKNDIEANQF) is flexible linker. The segment at 157–224 (FSKYIDEIYL…ILMKLSEKST (68 aa)) is domain III.

This sequence belongs to the RuvA family. As to quaternary structure, homotetramer. Forms an RuvA(8)-RuvB(12)-Holliday junction (HJ) complex. HJ DNA is sandwiched between 2 RuvA tetramers; dsDNA enters through RuvA and exits via RuvB. An RuvB hexamer assembles on each DNA strand where it exits the tetramer. Each RuvB hexamer is contacted by two RuvA subunits (via domain III) on 2 adjacent RuvB subunits; this complex drives branch migration. In the full resolvosome a probable DNA-RuvA(4)-RuvB(12)-RuvC(2) complex forms which resolves the HJ.

It localises to the cytoplasm. In terms of biological role, the RuvA-RuvB-RuvC complex processes Holliday junction (HJ) DNA during genetic recombination and DNA repair, while the RuvA-RuvB complex plays an important role in the rescue of blocked DNA replication forks via replication fork reversal (RFR). RuvA specifically binds to HJ cruciform DNA, conferring on it an open structure. The RuvB hexamer acts as an ATP-dependent pump, pulling dsDNA into and through the RuvAB complex. HJ branch migration allows RuvC to scan DNA until it finds its consensus sequence, where it cleaves and resolves the cruciform DNA. In Prochlorococcus marinus (strain NATL2A), this protein is Holliday junction branch migration complex subunit RuvA.